The chain runs to 137 residues: UPF0146 protein MJ0688 (137 aa).

This sequence belongs to the UPF0146 family.

The chain is UPF0146 protein MJ0688 from Methanocaldococcus jannaschii (strain ATCC 43067 / DSM 2661 / JAL-1 / JCM 10045 / NBRC 100440) (Methanococcus jannaschii).